A 208-amino-acid chain; its full sequence is Large ribosomal subunit protein uL3 (208 aa).

The interval 124 to 146 is disordered; the sequence is HGQSRGPMAHGSRYHRRPGSMGP.

Belongs to the universal ribosomal protein uL3 family. Part of the 50S ribosomal subunit. Forms a cluster with proteins L14 and L19.

Its function is as follows. One of the primary rRNA binding proteins, it binds directly near the 3'-end of the 23S rRNA, where it nucleates assembly of the 50S subunit. The polypeptide is Large ribosomal subunit protein uL3 (Streptococcus thermophilus (strain ATCC BAA-491 / LMD-9)).